The sequence spans 515 residues: 1-pyrroline-5-carboxylate dehydrogenase (515 aa).

Active-site residues include E286 and C320.

This sequence belongs to the aldehyde dehydrogenase family. RocA subfamily.

The enzyme catalyses L-glutamate 5-semialdehyde + NAD(+) + H2O = L-glutamate + NADH + 2 H(+). Its pathway is amino-acid degradation; L-proline degradation into L-glutamate; L-glutamate from L-proline: step 2/2. The sequence is that of 1-pyrroline-5-carboxylate dehydrogenase from Oceanobacillus iheyensis (strain DSM 14371 / CIP 107618 / JCM 11309 / KCTC 3954 / HTE831).